We begin with the raw amino-acid sequence, 353 residues long: 4-hydroxy-2-oxovalerate aldolase 1 (353 aa).

The region spanning 14-266 is the Pyruvate carboxyltransferase domain; it reads VRMTDTSLRD…KTGIDFFDIA (253 aa). 22–23 contacts substrate; that stretch reads RD. Asp23 is a binding site for Mn(2+). His26 serves as the catalytic Proton acceptor. Substrate-binding residues include Ser176 and His205. Mn(2+) is bound by residues His205 and His207. Tyr296 is a binding site for substrate.

It belongs to the 4-hydroxy-2-oxovalerate aldolase family.

It catalyses the reaction (S)-4-hydroxy-2-oxopentanoate = acetaldehyde + pyruvate. The polypeptide is 4-hydroxy-2-oxovalerate aldolase 1 (Mycobacterium sp. (strain KMS)).